We begin with the raw amino-acid sequence, 193 residues long: Ribose 1,5-bisphosphate phosphokinase PhnN (193 aa).

ATP is bound at residue 9 to 16; the sequence is GPSGAGKD.

Belongs to the ribose 1,5-bisphosphokinase family.

It catalyses the reaction alpha-D-ribose 1,5-bisphosphate + ATP = 5-phospho-alpha-D-ribose 1-diphosphate + ADP. It functions in the pathway metabolic intermediate biosynthesis; 5-phospho-alpha-D-ribose 1-diphosphate biosynthesis; 5-phospho-alpha-D-ribose 1-diphosphate from D-ribose 5-phosphate (route II): step 3/3. In terms of biological role, catalyzes the phosphorylation of ribose 1,5-bisphosphate to 5-phospho-D-ribosyl alpha-1-diphosphate (PRPP). The sequence is that of Ribose 1,5-bisphosphate phosphokinase PhnN from Yersinia pestis.